We begin with the raw amino-acid sequence, 140 residues long: Sex-regulated protein janus-B (140 aa).

Residue R42 participates in substrate binding. H69 serves as the catalytic Proton acceptor. 110–112 contributes to the substrate binding site; sequence SRT.

Belongs to the janus family.

Its function is as follows. JanA and janB regulate somatic sex differentiation. The polypeptide is Sex-regulated protein janus-B (janB) (Drosophila sechellia (Fruit fly)).